A 201-amino-acid polypeptide reads, in one-letter code: Twin horsetail protein 2 (201 aa).

It localises to the nucleus. In terms of biological role, required for correct meiotic chromosome segregation and recombination. This chain is Twin horsetail protein 2 (tht2), found in Schizosaccharomyces pombe (strain 972 / ATCC 24843) (Fission yeast).